Reading from the N-terminus, the 603-residue chain is UvrABC system protein C (603 aa).

The 78-residue stretch at 17-94 folds into the GIY-YIG domain; it reads TTSGCYKMLN…IKTHKPDYNV (78 aa). One can recognise a UVR domain in the interval 199 to 234; sequence SEILSQIDIKLKLAVQKEDFETAIKLKEMKSSLIEI.

The protein belongs to the UvrC family. Interacts with UvrB in an incision complex.

The protein localises to the cytoplasm. In terms of biological role, the UvrABC repair system catalyzes the recognition and processing of DNA lesions. UvrC both incises the 5' and 3' sides of the lesion. The N-terminal half is responsible for the 3' incision and the C-terminal half is responsible for the 5' incision. The chain is UvrABC system protein C from Borrelia garinii subsp. bavariensis (strain ATCC BAA-2496 / DSM 23469 / PBi) (Borreliella bavariensis).